The chain runs to 323 residues: Viral cathepsin (323 aa).

Residues 1-18 (MSKFLLYWFVYGVVCSAA) form the signal peptide. Residues 19–112 (YDILKAPNYF…VVLDRPPGKG (94 aa)) constitute a propeptide, activation peptide. Intrachain disulfides connect Cys133-Cys174, Cys167-Cys207, and Cys262-Cys310. The active site involves Cys136. N-linked (GlcNAc...) asparagine; by host glycosylation occurs at Asn158. Catalysis depends on residues His269 and Asn289.

This sequence belongs to the peptidase C1 family. Synthesized as an inactive proenzyme and activated by proteolytic removal of the inhibitory propeptide.

It carries out the reaction Endopeptidase of broad specificity, hydrolyzing substrates of both cathepsin L and cathepsin B.. In terms of biological role, cysteine protease that plays an essential role in host liquefaction to facilitate horizontal transmission of the virus. May participate in the degradation of foreign protein expressed by the baculovirus system. This is Viral cathepsin (VCATH) from Lepidoptera (butterflies and moths).